A 205-amino-acid polypeptide reads, in one-letter code: High frequency lysogenization protein HflD homolog (205 aa).

Belongs to the HflD family.

It localises to the cytoplasm. Its subcellular location is the cell inner membrane. This is High frequency lysogenization protein HflD homolog from Shewanella piezotolerans (strain WP3 / JCM 13877).